A 518-amino-acid polypeptide reads, in one-letter code: GMP synthase [glutamine-hydrolyzing] (518 aa).

Residues 6-200 (RLLIIDFGSQ…FVKLAGFKGD (195 aa)) form the Glutamine amidotransferase type-1 domain. Catalysis depends on cysteine 84, which acts as the Nucleophile. Active-site residues include histidine 175 and glutamate 177. One can recognise a GMPS ATP-PPase domain in the interval 201–393 (WTMGAYREEA…LGLPDSFIGR (193 aa)). 228 to 234 (SGGVDSS) lines the ATP pocket.

Homodimer.

The catalysed reaction is XMP + L-glutamine + ATP + H2O = GMP + L-glutamate + AMP + diphosphate + 2 H(+). Its pathway is purine metabolism; GMP biosynthesis; GMP from XMP (L-Gln route): step 1/1. Functionally, catalyzes the synthesis of GMP from XMP. The protein is GMP synthase [glutamine-hydrolyzing] of Cereibacter sphaeroides (strain ATCC 17025 / ATH 2.4.3) (Rhodobacter sphaeroides).